The sequence spans 33 residues: Photosystem II reaction center protein Psb30 (33 aa).

A helical transmembrane segment spans residues 5-25 (LIVQLTSLILISIAGPIIIAL).

It belongs to the Psb30/Ycf12 family. As to quaternary structure, PSII is composed of 1 copy each of membrane proteins PsbA, PsbB, PsbC, PsbD, PsbE, PsbF, PsbH, PsbI, PsbJ, PsbK, PsbL, PsbM, PsbT, PsbY, PsbZ, Psb30/Ycf12, peripheral proteins of the oxygen-evolving complex and a large number of cofactors. It forms dimeric complexes.

It is found in the plastid. The protein localises to the chloroplast thylakoid membrane. Functionally, a core subunit of photosystem II (PSII), probably helps stabilize the reaction center. This is Photosystem II reaction center protein Psb30 from Euglena myxocylindracea.